Here is a 291-residue protein sequence, read N- to C-terminus: MAKLSPRDIKRKINGIKNTQRITKAMKAVSAAKLRKAQALLYATRPYSNKLYELIEDLAVYIDRESHPLLEKREEKSVDLVIITADRGLAGAFNSNVIKTAWREIQRLKSEGKEVSLLLIGRKGVNFYKNKGFNIIEAYEDIYRDQVNLTYTAKVGGILASRFIDKKSDAVYLINNELITSSTYETKIRKLLPLESTASSKKLEEVSVYNIEPSKEEVLSSLLQRYINYQLFRALVESSTAEHSARMLAMDNATKNAGEAIRKWTIIFNKARQEAITTELIDIINAAEAIK.

It belongs to the ATPase gamma chain family. In terms of assembly, F-type ATPases have 2 components, CF(1) - the catalytic core - and CF(0) - the membrane proton channel. CF(1) has five subunits: alpha(3), beta(3), gamma(1), delta(1), epsilon(1). CF(0) has three main subunits: a, b and c.

Its subcellular location is the cell inner membrane. Its function is as follows. Produces ATP from ADP in the presence of a proton gradient across the membrane. The gamma chain is believed to be important in regulating ATPase activity and the flow of protons through the CF(0) complex. This is ATP synthase gamma chain from Sulfurihydrogenibium sp. (strain YO3AOP1).